The sequence spans 536 residues: SNW domain-containing protein 1 (536 aa).

The interval 1–46 is disordered; sequence MALTSFLPAPTQLSQDQLEAEEKARSQRSRQTSLVSSRREPPPYGY. Alanine 2 is subject to N-acetylalanine. Position 14 is a phosphoserine (serine 14). A Glycyl lysine isopeptide (Lys-Gly) (interchain with G-Cter in SUMO2) cross-link involves residue lysine 23. The tract at residues 59-79 is interaction with PPIL1; sequence GDGGAFPEIHVAQYPLDMGRK. Glycyl lysine isopeptide (Lys-Gly) (interchain with G-Cter in SUMO2) cross-links involve residues lysine 81, lysine 97, lysine 115, lysine 122, lysine 141, lysine 158, and lysine 170. An SNW region spans residues 174 to 339; it reads AQYIRYTPSQ…KARERRAGIK (166 aa). A phosphoserine mark is found at serine 182 and serine 190. Lysine 193 is covalently cross-linked (Glycyl lysine isopeptide (Lys-Gly) (interchain with G-Cter in SUMO2)). The tract at residues 209 to 234 is disordered; the sequence is PPRFKINKKIPRGPPSPPAPVMHSPS. Residues serine 224, serine 232, and serine 234 each carry the phosphoserine modification. Glycyl lysine isopeptide (Lys-Gly) (interchain with G-Cter in SUMO2) cross-links involve residues lysine 240, lysine 258, lysine 286, lysine 339, lysine 344, lysine 416, and lysine 441. The interval 311 to 386 is disordered; the sequence is KMAQKEKEKH…RSKLQRNENR (76 aa). Residue serine 446 is modified to Phosphoserine. Residue lysine 452 forms a Glycyl lysine isopeptide (Lys-Gly) (interchain with G-Cter in SUMO2) linkage. 2 stretches are compositionally biased toward basic and acidic residues: residues 469–489 and 503–530; these read TNRF…RGRE and KFLE…EHEG. Residues 469–536 form a disordered region; sequence TNRFVPDKEF…EHEGKKRRKE (68 aa). A phosphoserine mark is found at serine 479 and serine 481. Lysine 509 participates in a covalent cross-link: Glycyl lysine isopeptide (Lys-Gly) (interchain with G-Cter in SUMO2).

The protein belongs to the SNW family. Identified in the spliceosome C complex. Associates with U4/U6-U5 tri-small nuclear ribonucleoproteins (U4/U6-U5 tri-snRNPs). Component of the minor spliceosome, which splices U12-type introns. Interacts with SKI, SMAD2,SMAD3, RBPJ, RB1, PABPN1, MAGEA1, SIRT1, FOXN3, U2AF2, PPIL1, DAXX and ATP1B4. Interacts with VDR and RXRA; preferentially associates with VDR:RXRA heterodimers. Interacts with NCOR2. Interacts with MAML1. Interacts with NOTCH1 NICD; the interaction involves multimerized NOTCH1 NICD. Forms a complex with NOTCH1 NICD and MAML1; the association is dissociated by RBPJ. Associates with positive transcription elongation factor b (P-TEFb). Component of the SNARP complex which consists at least of SNIP1, SNW1, THRAP3, BCLAF1 and PNN.

The protein resides in the nucleus. Its function is as follows. Involved in pre-mRNA splicing as component of the spliceosome. As a component of the minor spliceosome, involved in the splicing of U12-type introns in pre-mRNAs. Required in the specific splicing of CDKN1A pre-mRNA; the function probably involves the recruitment of U2AF2 to the mRNA. May recruit PPIL1 to the spliceosome. May be involved in cyclin-D1/CCND1 mRNA stability through the SNARP complex which associates with both the 3'end of the CCND1 gene and its mRNA. Involved in transcriptional regulation. Modulates TGF-beta-mediated transcription via association with SMAD proteins, MYOD1-mediated transcription via association with PABPN1, RB1-mediated transcriptional repression, and retinoid-X receptor (RXR)- and vitamin D receptor (VDR)-dependent gene transcription in a cell line-specific manner probably involving coactivators NCOA1 and GRIP1. Is involved in NOTCH1-mediated transcriptional activation. Binds to multimerized forms of Notch intracellular domain (NICD) and is proposed to recruit transcriptional coactivators such as MAML1 to form an intermediate preactivation complex which associates with DNA-bound CBF-1/RBPJ to form a transcriptional activation complex by releasing SNW1 and redundant NOTCH1 NICD. This chain is SNW domain-containing protein 1 (SNW1), found in Pongo abelii (Sumatran orangutan).